The primary structure comprises 64 residues: MAFKIIASQCTQCGACEFECPSNAIELKGEKYVIDPKKCTECKGVFEIQQCASVCPMPKTCVPA.

The region spanning 2-30 (AFKIIASQCTQCGACEFECPSNAIELKGE) is the 4Fe-4S ferredoxin-type domain. Cys-10, Cys-13, Cys-16, Cys-20, Cys-39, Cys-42, Cys-51, and Cys-55 together coordinate [4Fe-4S] cluster.

[4Fe-4S] cluster is required as a cofactor.

In Sinorhizobium fredii (strain NBRC 101917 / NGR234), this protein is Ferredoxin-like protein in nif region (fdxN).